A 239-amino-acid polypeptide reads, in one-letter code: ATP-dependent dethiobiotin synthetase BioD (239 aa).

15–20 (EIGKTF) is an ATP binding site. Residue threonine 19 participates in Mg(2+) binding. Lysine 40 is a catalytic residue. ATP-binding positions include aspartate 57, 118-121 (EGVG), 178-179 (NH), and 211-213 (AHL). Residues aspartate 57 and glutamate 118 each coordinate Mg(2+).

It belongs to the dethiobiotin synthetase family. As to quaternary structure, homodimer. It depends on Mg(2+) as a cofactor.

The protein localises to the cytoplasm. The enzyme catalyses (7R,8S)-7,8-diammoniononanoate + CO2 + ATP = (4R,5S)-dethiobiotin + ADP + phosphate + 3 H(+). The protein operates within cofactor biosynthesis; biotin biosynthesis; biotin from 7,8-diaminononanoate: step 1/2. Functionally, catalyzes a mechanistically unusual reaction, the ATP-dependent insertion of CO2 between the N7 and N8 nitrogen atoms of 7,8-diaminopelargonic acid (DAPA, also called 7,8-diammoniononanoate) to form a ureido ring. The protein is ATP-dependent dethiobiotin synthetase BioD of Burkholderia ambifaria (strain MC40-6).